We begin with the raw amino-acid sequence, 236 residues long: Ribose-5-phosphate isomerase A (236 aa).

Residues 33–36 (TGST), 90–93 (DGAD), and 103–106 (KGGG) contribute to the substrate site. Glu112 acts as the Proton acceptor in catalysis. Position 130 (Lys130) interacts with substrate.

This sequence belongs to the ribose 5-phosphate isomerase family. Homodimer.

It catalyses the reaction aldehydo-D-ribose 5-phosphate = D-ribulose 5-phosphate. It participates in carbohydrate degradation; pentose phosphate pathway; D-ribose 5-phosphate from D-ribulose 5-phosphate (non-oxidative stage): step 1/1. Catalyzes the reversible conversion of ribose-5-phosphate to ribulose 5-phosphate. In Trichormus variabilis (strain ATCC 29413 / PCC 7937) (Anabaena variabilis), this protein is Ribose-5-phosphate isomerase A.